A 447-amino-acid polypeptide reads, in one-letter code: UDP-N-acetylglucosamine 1-carboxyvinyltransferase (447 aa).

27-28 (KN) contributes to the phosphoenolpyruvate binding site. A UDP-N-acetyl-alpha-D-glucosamine-binding site is contributed by Arg97. Cys121 acts as the Proton donor in catalysis. Residue Cys121 is modified to 2-(S-cysteinyl)pyruvic acid O-phosphothioketal. UDP-N-acetyl-alpha-D-glucosamine contacts are provided by residues 126-130 (RPVDL), Asp314, and Val336.

Belongs to the EPSP synthase family. MurA subfamily.

It is found in the cytoplasm. It carries out the reaction phosphoenolpyruvate + UDP-N-acetyl-alpha-D-glucosamine = UDP-N-acetyl-3-O-(1-carboxyvinyl)-alpha-D-glucosamine + phosphate. Its pathway is cell wall biogenesis; peptidoglycan biosynthesis. Functionally, cell wall formation. Adds enolpyruvyl to UDP-N-acetylglucosamine. This chain is UDP-N-acetylglucosamine 1-carboxyvinyltransferase, found in Trichormus variabilis (strain ATCC 29413 / PCC 7937) (Anabaena variabilis).